A 631-amino-acid chain; its full sequence is ESX-3 secretion system protein EccA3 (631 aa).

Position 385–392 (385–392 (GPPGTGKT)) interacts with ATP.

Belongs to the CbxX/CfxQ family. As to quaternary structure, part of the ESX-3 / type VII secretion system (T7SS), which is composed of cytosolic and membrane components.

Its subcellular location is the cytoplasm. Functionally, part of the ESX-3 specialized secretion system, which is important for iron and zinc uptake or homeostasis. EccA3 exhibits ATPase activity and may provide energy for the export of ESX-3 substrates. The protein is ESX-3 secretion system protein EccA3 of Mycobacterium tuberculosis (strain CDC 1551 / Oshkosh).